The chain runs to 181 residues: Crossover junction endodeoxyribonuclease RuvC (181 aa).

Residues D8, E67, and D139 contribute to the active site. 3 residues coordinate Mg(2+): D8, E67, and D139.

This sequence belongs to the RuvC family. As to quaternary structure, homodimer which binds Holliday junction (HJ) DNA. The HJ becomes 2-fold symmetrical on binding to RuvC with unstacked arms; it has a different conformation from HJ DNA in complex with RuvA. In the full resolvosome a probable DNA-RuvA(4)-RuvB(12)-RuvC(2) complex forms which resolves the HJ. Mg(2+) is required as a cofactor.

It localises to the cytoplasm. It carries out the reaction Endonucleolytic cleavage at a junction such as a reciprocal single-stranded crossover between two homologous DNA duplexes (Holliday junction).. The RuvA-RuvB-RuvC complex processes Holliday junction (HJ) DNA during genetic recombination and DNA repair. Endonuclease that resolves HJ intermediates. Cleaves cruciform DNA by making single-stranded nicks across the HJ at symmetrical positions within the homologous arms, yielding a 5'-phosphate and a 3'-hydroxyl group; requires a central core of homology in the junction. The consensus cleavage sequence is 5'-(A/T)TT(C/G)-3'. Cleavage occurs on the 3'-side of the TT dinucleotide at the point of strand exchange. HJ branch migration catalyzed by RuvA-RuvB allows RuvC to scan DNA until it finds its consensus sequence, where it cleaves and resolves the cruciform DNA. This Acinetobacter baumannii (strain SDF) protein is Crossover junction endodeoxyribonuclease RuvC.